A 403-amino-acid chain; its full sequence is Stearoyl-[acyl-carrier-protein] 9-desaturase 4, chloroplastic (403 aa).

A chloroplast-targeting transit peptide spans 1-44 (MALLLNSTMTVAMKQNPATAVSFMQTTCLGSSFSPPRHLQVSCV). The Fe cation site is built by E140, E178, H181, E231, E264, and H267.

It belongs to the fatty acid desaturase type 2 family. Homodimer. The cofactor is Fe(2+). In terms of tissue distribution, preferentially expressed in roots.

It is found in the plastid. The protein localises to the chloroplast. The catalysed reaction is octadecanoyl-[ACP] + 2 reduced [2Fe-2S]-[ferredoxin] + O2 + 2 H(+) = (9Z)-octadecenoyl-[ACP] + 2 oxidized [2Fe-2S]-[ferredoxin] + 2 H2O. The protein operates within lipid metabolism; fatty acid metabolism. Converts stearoyl-ACP to oleoyl-ACP by introduction of a cis double bond between carbons 9 and 10 of the acyl chain. This Arabidopsis thaliana (Mouse-ear cress) protein is Stearoyl-[acyl-carrier-protein] 9-desaturase 4, chloroplastic (S-ACP-DES4).